The chain runs to 262 residues: Ribosomal RNA small subunit methyltransferase A (262 aa).

S-adenosyl-L-methionine is bound by residues histidine 11, isoleucine 13, glycine 38, glutamate 60, aspartate 85, and asparagine 105.

It belongs to the class I-like SAM-binding methyltransferase superfamily. rRNA adenine N(6)-methyltransferase family. RsmA subfamily.

The protein localises to the cytoplasm. It carries out the reaction adenosine(1518)/adenosine(1519) in 16S rRNA + 4 S-adenosyl-L-methionine = N(6)-dimethyladenosine(1518)/N(6)-dimethyladenosine(1519) in 16S rRNA + 4 S-adenosyl-L-homocysteine + 4 H(+). Specifically dimethylates two adjacent adenosines (A1518 and A1519) in the loop of a conserved hairpin near the 3'-end of 16S rRNA in the 30S particle. May play a critical role in biogenesis of 30S subunits. In Neorickettsia sennetsu (strain ATCC VR-367 / Miyayama) (Ehrlichia sennetsu), this protein is Ribosomal RNA small subunit methyltransferase A.